The primary structure comprises 546 residues: Probable E3 ubiquitin-protein ligase NGR_a03640 (546 aa).

The segment at 1 to 70 (MNVQRPGLAV…RPWEGRPQEA (70 aa)) is disordered. An interaction with target proteins region spans residues 1 to 248 (MNVQRPGLAV…YAGPQIFLPM (248 aa)). Over residues 22-48 (SEPGSPAAAARWVEASTEAEASAASSS) the composition is skewed to low complexity. A compositionally biased stretch (basic and acidic residues) spans 58 to 67 (AEERPWEGRP). LRR repeat units follow at residues 104–125 (GLRRLNVNNNQLGDLPDTLPGT), 126–144 (LLELEASENRLTRLPDLPA), 145–166 (GLQRLNVENNRLTNLPEPLPAA), 167–186 (LEWLGAGYNQLTRLPEMIPP), and 187–208 (ELIWLGARNNQLTSVPESLLTQ). Residues 249-256 (GPVELARR) form a linker region. The NEL domain maps to 257–546 (PLHEVVADWL…KVLRGRGLEL (290 aa)). Residues 257–546 (PLHEVVADWL…KVLRGRGLEL (290 aa)) form an E3 ubiquitin-protein ligase catalytic domain region. Residue cysteine 338 is the Glycyl thioester intermediate of the active site.

This sequence belongs to the LRR-containing bacterial E3 ligase family. Post-translationally, ubiquitinated in the presence of host E1 ubiquitin-activating enzyme, E2 ubiquitin-conjugating enzyme and ubiquitin.

The protein localises to the secreted. Its subcellular location is the host cytoplasm. Its function is as follows. Effector proteins function to alter host cell physiology and promote bacterial survival in host tissues. This protein is an E3 ubiquitin ligase that interferes with host's ubiquitination pathway. The protein is Probable E3 ubiquitin-protein ligase NGR_a03640 of Sinorhizobium fredii (strain NBRC 101917 / NGR234).